The sequence spans 306 residues: MTKAGSKGGNLRDKLDGNELDLSLSDLNEVPVKELAALPKATVLDLSCNKLTTLPSDFCGLTHLVKLDLSKNKLRQLPADFGRLVNLQHLDLLNNRLVTLPVSFAQLKSLKWLDLKDNPLDPVLAKVAGDCLDEKQCKQCANKVLQHMKAVQADQERERQRRLEIDREAEKKWEAKQRAKEAQERELRKREKAEEKERRRKEYDALKAAKREQEKKPKKETNQAPKSKSSSRPRKPPPRKHTRSWAVLKLLLLLLLCVAGGLVACRVTELQQQPLCTSVNTIYDNAVRGLRSHDILQWVLQTDSQQ.

The residue at position 1 (Met1) is an N-acetylmethionine. An N-acetylthreonine; in Leucine-rich repeat-containing protein 59, N-terminally processed modification is found at Thr2. The Cytoplasmic segment spans residues 2–244; that stretch reads TKAGSKGGNL…KPPPRKHTRS (243 aa). 5 LRR repeats span residues 10–31, 40–62, 63–84, 86–107, and 109–128; these read NLRD…NEVP, KATV…CGLT, HLVK…FGRL, NLQH…FAQL, and SLKW…AKVA. Phosphoserine occurs at positions 23 and 25. Residue Lys73 is modified to N6-succinyllysine. Lys135 is modified (N6-acetyllysine). A coiled-coil region spans residues 152-216; the sequence is QADQERERQR…KAAKREQEKK (65 aa). The segment covering 175–221 has biased composition (basic and acidic residues); sequence AKQRAKEAQERELRKREKAEEKERRRKEYDALKAAKREQEKKPKKET. The interval 175 to 241 is disordered; that stretch reads AKQRAKEAQE…RPRKPPPRKH (67 aa). Positions 229-241 are enriched in basic residues; sequence SSSRPRKPPPRKH. Residues 245–265 traverse the membrane as a helical segment; it reads WAVLKLLLLLLLCVAGGLVAC. Residues 266–306 are Lumenal-facing; the sequence is RVTELQQQPLCTSVNTIYDNAVRGLRSHDILQWVLQTDSQQ.

In terms of assembly, can form homodimers. Interacts with SGO1. Interacts with FGF1.

The protein localises to the microsome membrane. It is found in the endoplasmic reticulum membrane. Its subcellular location is the nucleus envelope. Required for nuclear import of FGF1, but not that of FGF2. Might regulate nuclear import of exogenous FGF1 by facilitating interaction with the nuclear import machinery and by transporting cytosolic FGF1 to, and possibly through, the nuclear pores. The sequence is that of Leucine-rich repeat-containing protein 59 (LRRC59) from Bos taurus (Bovine).